The sequence spans 304 residues: Aspartate carbamoyltransferase catalytic subunit (304 aa).

R55 and T56 together coordinate carbamoyl phosphate. Residue K84 coordinates L-aspartate. Residues R105, H133, and Q136 each coordinate carbamoyl phosphate. Positions 165 and 226 each coordinate L-aspartate. The carbamoyl phosphate site is built by L265 and P266.

Belongs to the aspartate/ornithine carbamoyltransferase superfamily. ATCase family. In terms of assembly, heterooligomer of catalytic and regulatory chains.

The catalysed reaction is carbamoyl phosphate + L-aspartate = N-carbamoyl-L-aspartate + phosphate + H(+). The protein operates within pyrimidine metabolism; UMP biosynthesis via de novo pathway; (S)-dihydroorotate from bicarbonate: step 2/3. Catalyzes the condensation of carbamoyl phosphate and aspartate to form carbamoyl aspartate and inorganic phosphate, the committed step in the de novo pyrimidine nucleotide biosynthesis pathway. The polypeptide is Aspartate carbamoyltransferase catalytic subunit (Methanothrix thermoacetophila (strain DSM 6194 / JCM 14653 / NBRC 101360 / PT) (Methanosaeta thermophila)).